We begin with the raw amino-acid sequence, 106 residues long: uncharacterized protein (106 aa).

It is found in the mitochondrion. This is an uncharacterized protein from Arabidopsis thaliana (Mouse-ear cress).